A 63-amino-acid chain; its full sequence is Large ribosomal subunit protein uL30 (63 aa).

The protein belongs to the universal ribosomal protein uL30 family. As to quaternary structure, part of the 50S ribosomal subunit.

In Rickettsia peacockii (strain Rustic), this protein is Large ribosomal subunit protein uL30.